We begin with the raw amino-acid sequence, 525 residues long: Mitochondrial-processing peptidase subunit alpha (525 aa).

The N-terminal 33 residues, 1–33 (MAAVVLAATRLLRGSGSWGCSRLRFGPPAYRRF), are a transit peptide targeting the mitochondrion. Lys-64 carries the N6-succinyllysine modification. Lys-299 is modified (N6-acetyllysine).

The protein belongs to the peptidase M16 family. In terms of assembly, heterodimer of PMPCA (alpha) and PMPCB (beta) subunits, forming the mitochondrial processing protease (MPP) in which PMPCA is involved in substrate recognition and binding and PMPCB is the catalytic subunit.

The protein resides in the mitochondrion matrix. It localises to the mitochondrion inner membrane. Functionally, substrate recognition and binding subunit of the essential mitochondrial processing protease (MPP), which cleaves the mitochondrial sequence off newly imported precursors proteins. The polypeptide is Mitochondrial-processing peptidase subunit alpha (PMPCA) (Pongo abelii (Sumatran orangutan)).